The sequence spans 440 residues: GTPase Der (440 aa).

2 EngA-type G domains span residues 5–167 (ATVA…PEQE) and 178–353 (IMLS…KEHS). GTP contacts are provided by residues 11 to 18 (GRPNVGKS), 58 to 62 (DTGGI), 120 to 123 (NKSE), 184 to 191 (GRPNVGKS), 231 to 235 (DTAGL), and 296 to 299 (NKWD). The KH-like domain maps to 354-438 (KRITTADVNR…PIRILERVKQ (85 aa)).

Belongs to the TRAFAC class TrmE-Era-EngA-EngB-Septin-like GTPase superfamily. EngA (Der) GTPase family. As to quaternary structure, associates with the 50S ribosomal subunit.

Its function is as follows. GTPase that plays an essential role in the late steps of ribosome biogenesis. The polypeptide is GTPase Der (Natranaerobius thermophilus (strain ATCC BAA-1301 / DSM 18059 / JW/NM-WN-LF)).